Consider the following 91-residue polypeptide: Small ribosomal subunit protein uS17 (91 aa).

The protein belongs to the universal ribosomal protein uS17 family. In terms of assembly, part of the 30S ribosomal subunit.

One of the primary rRNA binding proteins, it binds specifically to the 5'-end of 16S ribosomal RNA. This is Small ribosomal subunit protein uS17 from Saccharopolyspora erythraea (strain ATCC 11635 / DSM 40517 / JCM 4748 / NBRC 13426 / NCIMB 8594 / NRRL 2338).